A 156-amino-acid chain; its full sequence is Bacterial microcompartment shell protein PduK (156 aa).

Residues 4–89 (SLGLLEVSGL…PGDGILSHSV (86 aa)) form the BMC domain. The interval 81–119 (GDGILSHSVTPESESEPAPAPTPVVPHEEIPEDHAAPEA) is disordered. The segment covering 106 to 116 (PHEEIPEDHAA) has biased composition (basic and acidic residues).

The protein belongs to the bacterial microcompartments protein family. As to quaternary structure, interacts with shell protein PduA and assembly protein PduM. Interacts with PduP, probably with its first 18 residues. Fe cation serves as cofactor.

The protein localises to the bacterial microcompartment. The protein operates within polyol metabolism; 1,2-propanediol degradation. Its function is as follows. A minor shell protein of the bacterial microcompartment (BMC) dedicated to 1,2-propanediol (1,2-PD) degradation. Functionally, expression of a cosmid containing the full 21-gene pdu operon in E.coli allows E.coli to grow on 1,2-propanediol (1,2-PD) with the appearance of bacterial microcompartments (BMC) in its cytoplasm. Overexpression of this protein leads to the appearance of a single large aggregate complex in the cytoplasm. The 1,2-PD-specific bacterial microcompartment (BMC) concentrates low levels of 1,2-PD catabolic enzymes, concentrates volatile reaction intermediates thus enhancing pathway flux and keeps the level of toxic, mutagenic propionaldehyde low. The polypeptide is Bacterial microcompartment shell protein PduK (Citrobacter freundii).